Here is a 103-residue protein sequence, read N- to C-terminus: Large ribosomal subunit protein bL21 (103 aa).

It belongs to the bacterial ribosomal protein bL21 family. As to quaternary structure, part of the 50S ribosomal subunit. Contacts protein L20.

Its function is as follows. This protein binds to 23S rRNA in the presence of protein L20. The polypeptide is Large ribosomal subunit protein bL21 (Ruminiclostridium cellulolyticum (strain ATCC 35319 / DSM 5812 / JCM 6584 / H10) (Clostridium cellulolyticum)).